A 296-amino-acid chain; its full sequence is Prostate androgen-regulated mucin-like protein 1 homolog (296 aa).

Positions 1–20 (MVCKALITLCIFAAGLRVQG) are cleaved as a signal peptide. Residues 21–244 (SPTPTLLPVS…EVENALSSGS (224 aa)) lie on the Extracellular side of the membrane. N-linked (GlcNAc...) asparagine glycosylation is found at Asn62, Asn96, and Asn108. The tract at residues 73–220 (LTSQLPTHPR…SPQDTEPGKV (148 aa)) is disordered. Residues 80–96 (HPREEAVTSPPLKREVN) show a composition bias toward basic and acidic residues. The span at 97–111 (STDSSPTGFSSNSSG) shows a compositional bias: low complexity. Positions 125-145 (SPETSVPATGSQSPTLLFSQG) are enriched in polar residues. Low complexity-rich tracts occupy residues 146 to 175 (PTSASTSPATSPSEPLSASVTSNHSSTVNN) and 195 to 205 (SHTPTSHVTEP). Asn168 carries an N-linked (GlcNAc...) asparagine glycan. Positions 206-217 (VPKEKSPQDTEP) are enriched in basic and acidic residues. The helical transmembrane segment at 245–265 (IAAITVTVIAVVLLVFGAAAY) threads the bilayer. At 266 to 296 (LKIRHSSYGRLLDDHDYGSWGNYNNPLYDDS) the chain is on the cytoplasmic side. Ser284 is modified (phosphoserine).

This sequence belongs to the PARM family. Post-translationally, highly N-glycosylated and O-glycosylated. In terms of tissue distribution, expressed in prostate. Detected in other organs at low levels, these include the heart and various tissues of the urogenital tract. Not detected in mammary gland.

The protein resides in the cell membrane. Its subcellular location is the golgi apparatus membrane. The protein localises to the endosome membrane. Its function is as follows. May regulate TLP1 expression and telomerase activity, thus enabling certain prostatic cells to resist apoptosis. This Rattus norvegicus (Rat) protein is Prostate androgen-regulated mucin-like protein 1 homolog (Parm1).